The sequence spans 83 residues: Sec-independent protein translocase protein TatA (83 aa).

Residues Gly2–Phe22 form a helical membrane-spanning segment. Basic and acidic residues-rich tracts occupy residues Ala50 to Ala65 and Ala74 to Lys83. Residues Ala50–Lys83 form a disordered region.

This sequence belongs to the TatA/E family. As to quaternary structure, the Tat system comprises two distinct complexes: a TatABC complex, containing multiple copies of TatA, TatB and TatC subunits, and a separate TatA complex, containing only TatA subunits. Substrates initially bind to the TatABC complex, which probably triggers association of the separate TatA complex to form the active translocon.

The protein resides in the cell inner membrane. Part of the twin-arginine translocation (Tat) system that transports large folded proteins containing a characteristic twin-arginine motif in their signal peptide across membranes. TatA could form the protein-conducting channel of the Tat system. The protein is Sec-independent protein translocase protein TatA of Saccharophagus degradans (strain 2-40 / ATCC 43961 / DSM 17024).